We begin with the raw amino-acid sequence, 193 residues long: 7-methyl-GTP pyrophosphatase (193 aa).

Residue Asp70 is the Proton acceptor of the active site.

It belongs to the Maf family. YceF subfamily. Requires a divalent metal cation as cofactor.

It is found in the cytoplasm. It catalyses the reaction N(7)-methyl-GTP + H2O = N(7)-methyl-GMP + diphosphate + H(+). In terms of biological role, nucleoside triphosphate pyrophosphatase that hydrolyzes 7-methyl-GTP (m(7)GTP). May have a dual role in cell division arrest and in preventing the incorporation of modified nucleotides into cellular nucleic acids. This chain is 7-methyl-GTP pyrophosphatase, found in Vibrio cholerae serotype O1 (strain ATCC 39315 / El Tor Inaba N16961).